Consider the following 476-residue polypeptide: Zinc metalloproteinase/disintegrin (476 aa).

The first 20 residues, 1–20, serve as a signal peptide directing secretion; that stretch reads MIQVLLVTICLAAFPYQGSS. A propeptide spanning residues 21 to 192 is cleaved from the precursor; sequence IILESGNVND…ASQSNLTPEQ (172 aa). Gln-193 carries the post-translational modification Pyrrolidone carboxylic acid. One can recognise a Peptidase M12B domain in the interval 198-393; the sequence is RYIELAVVAD…HNPQCILNKP (196 aa). Residues Glu-201 and Asp-285 each contribute to the Ca(2+) site. 3 cysteine pairs are disulfide-bonded: Cys-309–Cys-388, Cys-348–Cys-372, and Cys-350–Cys-355. Residue His-334 coordinates Zn(2+). The active site involves Glu-335. Zn(2+)-binding residues include His-338 and His-344. Ca(2+) contacts are provided by Cys-388 and Asn-391. A propeptide spanning residues 394–403 is cleaved from the precursor; it reads LTTVSGNELL. Residues 395–476 enclose the Disintegrin domain; it reads TTVSGNELLE…ADCPRNRFHA (82 aa). 6 cysteine pairs are disulfide-bonded: Cys-409/Cys-424, Cys-411/Cys-419, Cys-418/Cys-441, Cys-432/Cys-438, Cys-437/Cys-462, and Cys-450/Cys-469. A Cell attachment site motif is present at residues 454-456; the sequence is RGD.

Belongs to the venom metalloproteinase (M12B) family. P-II subfamily. P-IIa sub-subfamily. As to quaternary structure, monomer (metalloprotease). Requires Zn(2+) as cofactor. In terms of processing, the N-terminus is blocked. Post-translationally, not glycosylated. In terms of tissue distribution, expressed by the venom gland.

Its subcellular location is the secreted. Its activity is regulated as follows. Inhibited by EDTA, and 1,10-phenanthroline, but not by PMSF. Non-hemorrhagic proteinase that activates prothrombin (F2) calcium-independently. Activates factor X (F10) and hydrolyzes the Aalpha-chain and more slowly the Bbeta-chain of fibrin and fibrinogen without affecting the gamma chain. It induces neither detachment nor apoptosis of human endothelial cells and is also not able to trigger an endothelial pro-inflammatory cell response. Nitric oxide and prostacyclin levels released by endothelial cells are significantly increased after treatment with insularinase A. Functionally, inhibits ADP-induced platelet aggregation (IC(50)=0.8 uM for native protein). Interestingly, inhibits the adhesion of HUVECs to immobilized fibrinogen at very low concentrations (IC(50)=36 nM). This is Zinc metalloproteinase/disintegrin from Bothrops insularis (Golden lancehead).